We begin with the raw amino-acid sequence, 520 residues long: N-acetylgalactosamine-6-sulfatase (520 aa).

The first 23 residues, 1-23 (MAACTAAQQLLLVLSALGLLAAG), serve as a signal peptide directing secretion. Residues 24 to 377 (APQPPNIVLL…PTMLKGQMMD (354 aa)) are catalytic domain. Positions 36, 37, and 76 each coordinate Ca(2+). Cysteine 76 acts as the Nucleophile in catalysis. Cysteine 76 is subject to 3-oxoalanine (Cys). Residue histidine 139 is part of the active site. Asparagine 201 is a glycosylation site (N-linked (GlcNAc...) asparagine). Residues aspartate 286 and asparagine 287 each contribute to the Ca(2+) site. An intrachain disulfide couples cysteine 306 to cysteine 417. N-linked (GlcNAc...) asparagine glycosylation is present at asparagine 421. Disulfide bonds link cysteine 487/cysteine 516 and cysteine 499/cysteine 505.

It belongs to the sulfatase family. Homodimer. It depends on Ca(2+) as a cofactor. In terms of processing, the conversion to 3-oxoalanine (also known as C-formylglycine, FGly), of a serine or cysteine residue in prokaryotes and of a cysteine residue in eukaryotes, is critical for catalytic activity. Widely expressed. Higher expression in liver and kidney.

The protein localises to the lysosome. The enzyme catalyses Hydrolysis of the 6-sulfate groups of the N-acetyl-D-galactosamine 6-sulfate units of chondroitin sulfate and of the D-galactose 6-sulfate units of keratan sulfate.. This chain is N-acetylgalactosamine-6-sulfatase (Galns), found in Mus musculus (Mouse).